The sequence spans 682 residues: Potassium-transporting ATPase ATP-binding subunit (682 aa).

Helical transmembrane passes span 34–54 (PVMF…LAMV), 58–78 (IAGS…TVLF), 219–239 (IALT…TATL), and 254–274 (VLVA…LSAI). Aspartate 307 serves as the catalytic 4-aspartylphosphate intermediate. ATP is bound by residues aspartate 344, glutamate 348, 377–384 (FTAQSRMS), and lysine 395. 2 residues coordinate Mg(2+): aspartate 518 and aspartate 522. A run of 3 helical transmembrane segments spans residues 588-608 (FAII…LNVM), 616-636 (AILS…PLAL), and 662-682 (LVVP…LGLA).

Belongs to the cation transport ATPase (P-type) (TC 3.A.3) family. Type IA subfamily. The system is composed of three essential subunits: KdpA, KdpB and KdpC.

It localises to the cell inner membrane. The enzyme catalyses K(+)(out) + ATP + H2O = K(+)(in) + ADP + phosphate + H(+). Its function is as follows. Part of the high-affinity ATP-driven potassium transport (or Kdp) system, which catalyzes the hydrolysis of ATP coupled with the electrogenic transport of potassium into the cytoplasm. This subunit is responsible for energy coupling to the transport system and for the release of the potassium ions to the cytoplasm. The chain is Potassium-transporting ATPase ATP-binding subunit from Salmonella agona (strain SL483).